Here is a 500-residue protein sequence, read N- to C-terminus: Abscisic acid 8'-hydroxylase 3 (500 aa).

A helical transmembrane segment spans residues 3–23; it reads ASFVIVIVISFFISLAFMCYV. Heme is bound at residue cysteine 426.

Belongs to the cytochrome P450 family. Heme serves as cofactor.

It localises to the membrane. The catalysed reaction is 2-cis-(+)-abscisate + reduced [NADPH--hemoprotein reductase] + O2 = (+)-8'-hydroxyabscisate + oxidized [NADPH--hemoprotein reductase] + H2O + H(+). It functions in the pathway plant hormone degradation; abscisic acid degradation. Involved in the oxidative degradation of abscisic acid. This Oryza sativa subsp. indica (Rice) protein is Abscisic acid 8'-hydroxylase 3 (CYP707A7).